Consider the following 148-residue polypeptide: Large ribosomal subunit protein uL15 (148 aa).

A disordered region spans residues 1-51; sequence MNLSSLKPAEGAVKSRKRIGRGPGSGLGGTSTRGHKGAKSRSGYSKKIGFE. Over residues 21–31 the composition is skewed to gly residues; the sequence is RGPGSGLGGTS.

Belongs to the universal ribosomal protein uL15 family. In terms of assembly, part of the 50S ribosomal subunit.

In terms of biological role, binds to the 23S rRNA. This chain is Large ribosomal subunit protein uL15, found in Porphyromonas gingivalis (strain ATCC BAA-308 / W83).